A 456-amino-acid chain; its full sequence is Peripherin (456 aa).

Residues methionine 1–arginine 14 are compositionally biased toward polar residues. The disordered stretch occupies residues methionine 1–arginine 55. Residues methionine 1 to alanine 90 form a head region. Low complexity predominate over residues threonine 16–arginine 55. The region spanning glutamate 88–isoleucine 397 is the IF rod domain. A coil 1A region spans residues glutamate 91–alanine 123. Residues arginine 124 to leucine 134 are linker 1. The tract at residues cysteine 135–valine 230 is coil 1B. The linker 2 stretch occupies residues glutamine 231 to threonine 252. Residues serine 253–serine 395 are coil 2. The interval arginine 396–lysine 456 is tail. The segment at serine 411–lysine 456 is disordered. Residues isoleucine 434 to lysine 456 show a composition bias toward basic and acidic residues.

Belongs to the intermediate filament family. Forms homodimers (in vitro). Homopolymerizes into a filamentous network (in vitro).

The protein resides in the cytoplasm. It localises to the cytoskeleton. The protein localises to the cell projection. Its subcellular location is the axon. It is found in the perikaryon. Class-III neuronal intermediate filament protein. My form an independent structural network without the involvement of other neurofilaments or may cooperate with other neuronal intermediate filament proteins to form a filamentous network. The polypeptide is Peripherin (prph) (Xenopus laevis (African clawed frog)).